A 749-amino-acid polypeptide reads, in one-letter code: MAHQKLESVGSGMLDHRVRPGPVPHSQEPESEDMELPLEGYVPEGLELAALRPESPAPEEQECHNHSPDGDSSSDYVNNTSEEEDYDEGLPEEEEGITYYIRYCPEDDSYLEGMDCNGEEYLAHGAHPVDTDECQEAVEEWTDSAGPRPHSHEAEGSQDYPDGQLPIPEDEPSVLEAHDQEEDGHYCASKEGYQDYYPEEANGNTSASPYRLRRGDRDLEDQEEDIDQIVAEIKMSLSMTSITSASEASPEHGPEPGPGDSAEACPPIKASCSPSRHEARPKSLNLPPEAKHPGDPQRGFKPKTRTPEERPKWPHEQVCNGLEQPRKQQRSDLNGPVDNNNIPETKKVASFPSFVAVPGPCEPEDLIDGIIFAANYLGSTQLLSERNPSKNIRMMQAQEAVSRVKRMQKAAKIKKKANSEGDAQTLTEVDLFISAQRIKVLNADTQETMMDHALRTISYIADIGNIVVLMARRRMPRSASQDCIETTPGAQEGKKQYKMICHVFESEDAQLIAQSIGQAFSVAYQEFLRANGINPEDLSQKEYSDIINTQEMYNDDLIHFSNSENCKELQLEKHKGEILGVVVVESGWGSILPTVILANMMNGGPAARSGKLSIGDQIMSINGTSLVGLPLATCQGIIKGLKNQTQVKLNIVSCPPVTTVLIKRPDLKYQLGFSVQNGIICSLMRGGIAERGGVRVGHRIIEINGQSVVATAHEKIVQALSNSVGEIHMKTMPAAMFRLLTGQETPLYI.

Disordered stretches follow at residues 1-94 and 130-343; these read MAHQ…PEEE and DTDE…NNIP. Ser-11 is subject to Phosphoserine. Residues 70–80 are compositionally biased toward polar residues; that stretch reads GDSSSDYVNNT. Composition is skewed to acidic residues over residues 81-94 and 131-142; these read SEEE…PEEE and TDECQEAVEEWT. The STXBP1-binding stretch occupies residues 185-270; sequence HYCASKEGYQ…SAEACPPIKA (86 aa). Ser-208 carries the phosphoserine modification. Residues 218–227 show a composition bias toward acidic residues; that stretch reads DLEDQEEDID. Positions 237 to 247 are enriched in polar residues; that stretch reads LSMTSITSASE. Positions 305 to 315 are enriched in basic and acidic residues; sequence RTPEERPKWPH. Positions 366–555 constitute a PID domain; that stretch reads LIDGIIFAAN…IINTQEMYND (190 aa). 2 consecutive PDZ domains span residues 568–653 and 659–735; these read ELQL…NIVS and TVLI…MPAA.

As to quaternary structure, part of a multimeric complex containing STXBP1 and syntaxin-1. Binds to the cytoplasmic domain of amyloid-beta protein, and to the nuclear factor NF-kappa-B/p65 via its PDZ domain. Interacts with the N-terminal domain of NECAB3.

Functionally, putative function in synaptic vesicle exocytosis by binding to STXBP1, an essential component of the synaptic vesicle exocytotic machinery. May modulate processing of the amyloid-beta precursor protein (APP) and hence formation of APP-beta. This Pongo abelii (Sumatran orangutan) protein is Amyloid-beta A4 precursor protein-binding family A member 2 (APBA2).